The primary structure comprises 162 residues: Ribose-5-phosphate isomerase B (162 aa).

D-ribulose 5-phosphate contacts are provided by residues 11–12 and 70–74; these read DH and GSGNG. Residue Glu-75 is the Proton acceptor of the active site. His-102 functions as the Proton donor in the catalytic mechanism. Residues Asn-103, Arg-113, Arg-137, and Arg-141 each contribute to the D-ribulose 5-phosphate site.

This sequence belongs to the LacAB/RpiB family. Homodimer.

The enzyme catalyses aldehydo-D-ribose 5-phosphate = D-ribulose 5-phosphate. It functions in the pathway carbohydrate degradation; pentose phosphate pathway; D-ribose 5-phosphate from D-ribulose 5-phosphate (non-oxidative stage): step 1/1. Catalyzes the interconversion of ribulose-5-P and ribose-5-P. This chain is Ribose-5-phosphate isomerase B, found in Mycobacterium bovis (strain ATCC BAA-935 / AF2122/97).